A 908-amino-acid chain; its full sequence is Translation initiation factor IF-2 (908 aa).

2 disordered regions span residues 123 to 154 and 212 to 278; these read EEPPILQPELPTEEKEELEVIESPQAPQEELK and KKEP…VSEK. The tr-type G domain occupies 407 to 577; sequence ERAPIVTIMG…LFEAELLELK (171 aa). The segment at 416 to 423 is G1; sequence GHVDHGKT. 416–423 serves as a coordination point for GTP; sequence GHVDHGKT. The G2 stretch occupies residues 441 to 445; it reads GITQH. Residues 463–466 form a G3 region; that stretch reads DTPG. GTP is bound by residues 463–467 and 517–520; these read DTPGH and NKMD. A G4 region spans residues 517–520; that stretch reads NKMD. Residues 553 to 555 form a G5 region; sequence SAI.

Belongs to the TRAFAC class translation factor GTPase superfamily. Classic translation factor GTPase family. IF-2 subfamily.

The protein localises to the cytoplasm. Its function is as follows. One of the essential components for the initiation of protein synthesis. Protects formylmethionyl-tRNA from spontaneous hydrolysis and promotes its binding to the 30S ribosomal subunits. Also involved in the hydrolysis of GTP during the formation of the 70S ribosomal complex. The polypeptide is Translation initiation factor IF-2 (Amoebophilus asiaticus (strain 5a2)).